The chain runs to 452 residues: Tripartite motif-containing protein 51 (452 aa).

The RING-type zinc finger occupies 15 to 56 (CPICMNYFLDPVTIDCGHSFCRPCLYLNWQDTAVLAQCSECK). The B box-type zinc-finger motif lies at 88–129 (SEEQICGMHRETKKMFCEVDKSLLCLPCSNSQEHRNHIHCPI). Zn(2+)-binding residues include C93, H96, C115, and H121. The 184-residue stretch at 269 to 452 (ELSAGPITGL…LRPIFCCSHF (184 aa)) folds into the B30.2/SPRY domain.

Belongs to the TRIM/RBCC family.

The polypeptide is Tripartite motif-containing protein 51 (TRIM51) (Homo sapiens (Human)).